We begin with the raw amino-acid sequence, 162 residues long: Phosphopantetheine adenylyltransferase (162 aa).

Thr9 provides a ligand contact to substrate. ATP contacts are provided by residues 9 to 10 and His17; that span reads TF. Residues Lys41, Leu77, and Arg91 each contribute to the substrate site. Residues 92–94, Glu102, and 127–133 each bind ATP; these read GLR and RQAIASK.

The protein belongs to the bacterial CoaD family. In terms of assembly, homohexamer. Mg(2+) is required as a cofactor.

It localises to the cytoplasm. The enzyme catalyses (R)-4'-phosphopantetheine + ATP + H(+) = 3'-dephospho-CoA + diphosphate. The protein operates within cofactor biosynthesis; coenzyme A biosynthesis; CoA from (R)-pantothenate: step 4/5. Reversibly transfers an adenylyl group from ATP to 4'-phosphopantetheine, yielding dephospho-CoA (dPCoA) and pyrophosphate. The sequence is that of Phosphopantetheine adenylyltransferase from Cereibacter sphaeroides (strain ATCC 17029 / ATH 2.4.9) (Rhodobacter sphaeroides).